The chain runs to 22 residues: Zinc finger protein 326 (22 aa).

Positions 1 to 22 are disordered; that stretch reads QGYGFNEPEQTRNQGGSSWEAP. Over residues 11-22 the composition is skewed to polar residues; that stretch reads TRNQGGSSWEAP.

Belongs to the AKAP95 family.

It localises to the nucleus matrix. In terms of biological role, probable transcriptional activator which may play a role in neuronal differentiation. Able to bind DNA and activate expression in vitro. This chain is Zinc finger protein 326 (Znf326), found in Rattus norvegicus (Rat).